The sequence spans 113 residues: Tubulin alpha chain (113 aa).

Position 52 (Glu52) interacts with GTP. Residue Glu52 coordinates Mg(2+).

Belongs to the tubulin family. In terms of assembly, dimer of alpha and beta chains. A typical microtubule is a hollow water-filled tube with an outer diameter of 25 nm and an inner diameter of 15 nM. Alpha-beta heterodimers associate head-to-tail to form protofilaments running lengthwise along the microtubule wall with the beta-tubulin subunit facing the microtubule plus end conferring a structural polarity. Microtubules usually have 13 protofilaments but different protofilament numbers can be found in some organisms and specialized cells. Mg(2+) is required as a cofactor.

Its subcellular location is the cytoplasm. It is found in the cytoskeleton. It carries out the reaction GTP + H2O = GDP + phosphate + H(+). Tubulin is the major constituent of microtubules, a cylinder consisting of laterally associated linear protofilaments composed of alpha- and beta-tubulin heterodimers. Microtubules grow by the addition of GTP-tubulin dimers to the microtubule end, where a stabilizing cap forms. Below the cap, tubulin dimers are in GDP-bound state, owing to GTPase activity of alpha-tubulin. The polypeptide is Tubulin alpha chain (TUBA) (Picea abies (Norway spruce)).